Here is a 62-residue protein sequence, read N- to C-terminus: Large ribosomal subunit protein uL29 (62 aa).

This sequence belongs to the universal ribosomal protein uL29 family.

The chain is Large ribosomal subunit protein uL29 from Ruthia magnifica subsp. Calyptogena magnifica.